A 367-amino-acid chain; its full sequence is F-box only protein 25 (367 aa).

The segment at methionine 1–arginine 83 is interaction with beta-actin. The F-box domain occupies leucine 226–glutamine 274.

Part of a SCF (SKP1-cullin-F-box) protein ligase complex consisting of FBXO25, SKP1, CUL1 and RBX1. Interacts directly with SKP1 and CUL1. Interacts (via C-terminus) with beta-actin (via N-terminus). Expressed in all brain tissue observed.

It localises to the nucleus. It functions in the pathway protein modification; protein ubiquitination. Functionally, substrate-recognition component of the SCF (SKP1-CUL1-F-box protein)-type E3 ubiquitin ligase complex. May play a role in accumulation of expanded polyglutamine (polyQ) protein huntingtin (HTT). The polypeptide is F-box only protein 25 (FBXO25) (Homo sapiens (Human)).